Reading from the N-terminus, the 123-residue chain is Cyclic ether formation enzyme xenC (123 aa).

Residues 1–24 form the signal peptide; that stretch reads MSSLLLSDVLSYGIFGFSALCVQA. 2 helical membrane-spanning segments follow: residues 58–78 and 102–122; these read SALR…LWSP and LGES…AILV.

This sequence belongs to the cyclic ether formation enzyme xenC family.

It is found in the membrane. Its pathway is mycotoxin biosynthesis. Its function is as follows. Cyclic ether formation enzyme; part of the gene cluster that mediates the biosynthesis of xenoacremones such as xenoacremone A, a compound that shows inhibitory activity toward the PI3K/AKT signaling pathway and which has the ability to induce apoptosis of A549 lung cancer cells. Within the pathway, cooperation of the hybrid PKS-NRPS xenE and the trans-acting enoyl reductase xenG is responsible for the formation of the reduced tyrosine-nonaketide derivative. The alpha/beta hydrolase xenA then accelerates intramolecular nucleophilic attack to give a pyrrolidone derivative. Subsequently, three enzymes, xenF, xenD, and xenC, coordinately participate in the conversion to xenoacremone B. XenF catalyzes sigmatropic rearrangement to form an A-ring, which leads to an unusual intermediate with a hexane ring, which is required for the formation of the tricarbocyclic product. Epoxidation catalyzed by xenD and the formation of the paracyclophane ether catalyzed by xenC initiate a spontaneous intramolecular Diels-Alder (IMDA) reaction to yield xenoacremone B. Spontaneous hydration of xenoacremone B leads to the formation of xenoacremone A, which undergoes subsequent methylation to afford xenoacremone C. The sequence is that of Cyclic ether formation enzyme xenC from Xenoacremonium sinensis (Endophyte fungus).